The chain runs to 235 residues: Sugar fermentation stimulation protein homolog (235 aa).

Belongs to the SfsA family.

This Bartonella henselae (strain ATCC 49882 / DSM 28221 / CCUG 30454 / Houston 1) (Rochalimaea henselae) protein is Sugar fermentation stimulation protein homolog.